Reading from the N-terminus, the 88-residue chain is UPF0250 protein Sputcn32_2874 (88 aa).

This sequence belongs to the UPF0250 family.

The sequence is that of UPF0250 protein Sputcn32_2874 from Shewanella putrefaciens (strain CN-32 / ATCC BAA-453).